We begin with the raw amino-acid sequence, 358 residues long: Protein-glutamate methylesterase/protein-glutamine glutaminase 1 (358 aa).

Positions 8–125 (RVLIVDDSAV…ARGLEGYAEE (118 aa)) constitute a Response regulatory domain. Position 59 is a 4-aspartylphosphate (aspartate 59). In terms of domain architecture, CheB-type methylesterase spans 165–352 (FRTTDRLIAI…LDRVAERLLA (188 aa)). Residues serine 177, histidine 203, and aspartate 299 contribute to the active site.

The protein belongs to the CheB family. In terms of processing, phosphorylated by CheA. Phosphorylation of the N-terminal regulatory domain activates the methylesterase activity.

The protein localises to the cytoplasm. The catalysed reaction is [protein]-L-glutamate 5-O-methyl ester + H2O = L-glutamyl-[protein] + methanol + H(+). It carries out the reaction L-glutaminyl-[protein] + H2O = L-glutamyl-[protein] + NH4(+). Involved in chemotaxis. Part of a chemotaxis signal transduction system that modulates chemotaxis in response to various stimuli. Catalyzes the demethylation of specific methylglutamate residues introduced into the chemoreceptors (methyl-accepting chemotaxis proteins or MCP) by CheR. Also mediates the irreversible deamidation of specific glutamine residues to glutamic acid. This Xanthomonas axonopodis pv. citri (strain 306) protein is Protein-glutamate methylesterase/protein-glutamine glutaminase 1.